Here is a 248-residue protein sequence, read N- to C-terminus: 2-C-methyl-D-erythritol 4-phosphate cytidylyltransferase (248 aa).

It belongs to the IspD/TarI cytidylyltransferase family. IspD subfamily.

The catalysed reaction is 2-C-methyl-D-erythritol 4-phosphate + CTP + H(+) = 4-CDP-2-C-methyl-D-erythritol + diphosphate. It participates in isoprenoid biosynthesis; isopentenyl diphosphate biosynthesis via DXP pathway; isopentenyl diphosphate from 1-deoxy-D-xylulose 5-phosphate: step 2/6. Its function is as follows. Catalyzes the formation of 4-diphosphocytidyl-2-C-methyl-D-erythritol from CTP and 2-C-methyl-D-erythritol 4-phosphate (MEP). This is 2-C-methyl-D-erythritol 4-phosphate cytidylyltransferase from Corynebacterium efficiens (strain DSM 44549 / YS-314 / AJ 12310 / JCM 11189 / NBRC 100395).